The sequence spans 295 residues: Tissue factor (295 aa).

An N-terminal signal peptide occupies residues 1–32; it reads METPAWPRVPRPETAVARTLLLGWVFAQVAGA. Residues 33–251 are Extracellular-facing; the sequence is SGTTNTVAAY…MGQEKGEFRE (219 aa). 2 consecutive short sequence motifs (WKS motif) follow at residues 46-48 and 77-79; these read WKS. Residues Cys81 and Cys89 are joined by a disulfide bond. N-linked (GlcNAc...) asparagine glycans are attached at residues Asn156 and Asn169. The WKS motif motif lies at 190 to 192; that stretch reads WKS. Cysteines 218 and 241 form a disulfide. Residues 252–274 traverse the membrane as a helical segment; that stretch reads IFYIIGAVVFVVIILVIILAISL. Over 275–295 the chain is Cytoplasmic; sequence HKCRKAGVGQSWKENSPLNVS. Cys277 carries the S-palmitoyl cysteine lipid modification.

The protein belongs to the tissue factor family. As to quaternary structure, interacts with HSPE; the interaction, inhibited by heparin, promotes the generation of activated factor X and activates coagulation in the presence of activated factor VII. Lung, placenta and pancreas.

The protein resides in the membrane. The protein localises to the secreted. Functionally, initiates blood coagulation by forming a complex with circulating factor VII or VIIa. The [TF:VIIa] complex activates factors IX or X by specific limited proteolysis. TF plays a role in normal hemostasis by initiating the cell-surface assembly and propagation of the coagulation protease cascade. The chain is Tissue factor (F3) from Homo sapiens (Human).